The primary structure comprises 508 residues: GATA zinc finger domain-containing protein 13 (508 aa).

Disordered stretches follow at residues 20–51 (YSKN…INNN) and 203–296 (MSII…PEIE). Residues 23-51 (NNNNNNNNNNNNNINNNNNNNNNNNINNN) show a composition bias toward low complexity. Polar residues predominate over residues 203 to 224 (MSIIPSDNFPTPQLPLETNTDL). Over residues 225 to 247 (NNTSDCSSTTFSSPPSSAFNSPN) the composition is skewed to low complexity. A compositionally biased stretch (polar residues) spans 248-266 (LQNDYTQPQNQKSQSSTIV). Positions 269–279 (NSSKSKSKNNK) are enriched in basic residues. A GATA-type zinc finger spans residues 327–354 (CSICKIKCSIYWRRILINEVRTSVCNAC). Residues 356 to 433 (LRTMKKTKKE…NNNNNNNNNN (78 aa)) are a coiled coil. Residues 399–482 (TTTTTTTTTS…NNNNNDNYND (84 aa)) show a composition bias toward low complexity. Positions 399 to 484 (TTTTTTTTTS…NNNDNYNDSI (86 aa)) are disordered.

This chain is GATA zinc finger domain-containing protein 13 (gtaM), found in Dictyostelium discoideum (Social amoeba).